A 635-amino-acid chain; its full sequence is Threonine--tRNA ligase (635 aa).

In terms of domain architecture, TGS spans 1-61 (MVSIRLPDGS…DHDASLAIVT (61 aa)). The tract at residues 242-533 (DHRKLGKQLD…LIEHHAGAMP (292 aa)) is catalytic. Residues Cys333, His384, and His510 each coordinate Zn(2+).

The protein belongs to the class-II aminoacyl-tRNA synthetase family. As to quaternary structure, homodimer. Zn(2+) is required as a cofactor.

The protein resides in the cytoplasm. The catalysed reaction is tRNA(Thr) + L-threonine + ATP = L-threonyl-tRNA(Thr) + AMP + diphosphate + H(+). Functionally, catalyzes the attachment of threonine to tRNA(Thr) in a two-step reaction: L-threonine is first activated by ATP to form Thr-AMP and then transferred to the acceptor end of tRNA(Thr). Also edits incorrectly charged L-seryl-tRNA(Thr). The protein is Threonine--tRNA ligase of Burkholderia multivorans (strain ATCC 17616 / 249).